We begin with the raw amino-acid sequence, 362 residues long: Protein U8 (362 aa).

It belongs to the herpesviridae US22 family.

The chain is Protein U8 (U8) from Human herpesvirus 7 (strain JI) (HHV-7).